The chain runs to 349 residues: Phosphoribosylformylglycinamidine cyclo-ligase (349 aa).

Belongs to the AIR synthase family.

The protein resides in the cytoplasm. The catalysed reaction is 2-formamido-N(1)-(5-O-phospho-beta-D-ribosyl)acetamidine + ATP = 5-amino-1-(5-phospho-beta-D-ribosyl)imidazole + ADP + phosphate + H(+). It participates in purine metabolism; IMP biosynthesis via de novo pathway; 5-amino-1-(5-phospho-D-ribosyl)imidazole from N(2)-formyl-N(1)-(5-phospho-D-ribosyl)glycinamide: step 2/2. The polypeptide is Phosphoribosylformylglycinamidine cyclo-ligase (Albidiferax ferrireducens (strain ATCC BAA-621 / DSM 15236 / T118) (Rhodoferax ferrireducens)).